Here is a 535-residue protein sequence, read N- to C-terminus: CTP synthase (535 aa).

Residues 1 to 266 form an amidoligase domain region; it reads MKFVVITGGV…GDYICERLGL (266 aa). Serine 12 contacts CTP. Position 12 (serine 12) interacts with UTP. Residues 13–18 and aspartate 70 contribute to the ATP site; that span reads GIGKGI. Positions 70 and 140 each coordinate Mg(2+). Residues 147 to 149, 187 to 192, and lysine 223 each bind CTP; these read DIE and KTKPTQ. Residues 187-192 and lysine 223 contribute to the UTP site; that span reads KTKPTQ. In terms of domain architecture, Glutamine amidotransferase type-1 spans 291–535; the sequence is RIAVVGKYVD…IKAAAGQGPD (245 aa). Glycine 355 contacts L-glutamine. The active-site Nucleophile; for glutamine hydrolysis is cysteine 382. L-glutamine contacts are provided by residues 383–386, glutamate 406, and arginine 464; that span reads LGFQ. Catalysis depends on residues histidine 508 and glutamate 510.

The protein belongs to the CTP synthase family. In terms of assembly, homotetramer.

The catalysed reaction is UTP + L-glutamine + ATP + H2O = CTP + L-glutamate + ADP + phosphate + 2 H(+). The enzyme catalyses L-glutamine + H2O = L-glutamate + NH4(+). It catalyses the reaction UTP + NH4(+) + ATP = CTP + ADP + phosphate + 2 H(+). The protein operates within pyrimidine metabolism; CTP biosynthesis via de novo pathway; CTP from UDP: step 2/2. Its activity is regulated as follows. Allosterically activated by GTP, when glutamine is the substrate; GTP has no effect on the reaction when ammonia is the substrate. The allosteric effector GTP functions by stabilizing the protein conformation that binds the tetrahedral intermediate(s) formed during glutamine hydrolysis. Inhibited by the product CTP, via allosteric rather than competitive inhibition. Functionally, catalyzes the ATP-dependent amination of UTP to CTP with either L-glutamine or ammonia as the source of nitrogen. Regulates intracellular CTP levels through interactions with the four ribonucleotide triphosphates. The protein is CTP synthase of Methanopyrus kandleri (strain AV19 / DSM 6324 / JCM 9639 / NBRC 100938).